Consider the following 567-residue polypeptide: Dihydroxy-acid dehydratase (567 aa).

C52 contacts [2Fe-2S] cluster. D84 is a binding site for Mg(2+). Position 125 (C125) interacts with [2Fe-2S] cluster. D126 and K127 together coordinate Mg(2+). Position 127 is an N6-carboxylysine (K127). C197 contributes to the [2Fe-2S] cluster binding site. E448 contacts Mg(2+). The Proton acceptor role is filled by S474.

The protein belongs to the IlvD/Edd family. In terms of assembly, homodimer. The cofactor is [2Fe-2S] cluster. It depends on Mg(2+) as a cofactor.

It carries out the reaction (2R)-2,3-dihydroxy-3-methylbutanoate = 3-methyl-2-oxobutanoate + H2O. It catalyses the reaction (2R,3R)-2,3-dihydroxy-3-methylpentanoate = (S)-3-methyl-2-oxopentanoate + H2O. It participates in amino-acid biosynthesis; L-isoleucine biosynthesis; L-isoleucine from 2-oxobutanoate: step 3/4. It functions in the pathway amino-acid biosynthesis; L-valine biosynthesis; L-valine from pyruvate: step 3/4. Functionally, functions in the biosynthesis of branched-chain amino acids. Catalyzes the dehydration of (2R,3R)-2,3-dihydroxy-3-methylpentanoate (2,3-dihydroxy-3-methylvalerate) into 2-oxo-3-methylpentanoate (2-oxo-3-methylvalerate) and of (2R)-2,3-dihydroxy-3-methylbutanoate (2,3-dihydroxyisovalerate) into 2-oxo-3-methylbutanoate (2-oxoisovalerate), the penultimate precursor to L-isoleucine and L-valine, respectively. This chain is Dihydroxy-acid dehydratase, found in Streptococcus pneumoniae (strain CGSP14).